The sequence spans 196 residues: Serine recombinase PinQ (196 aa).

The region spanning 3 to 143 (QIFAYCRIST…SGIVRARGAG (141 aa)) is the Resolvase/invertase-type recombinase catalytic domain. Ser11 acts as the O-(5'-phospho-DNA)-serine intermediate in catalysis.

This sequence belongs to the site-specific recombinase resolvase family.

The protein is Serine recombinase PinQ (pinQ) of Escherichia coli (strain K12).